The sequence spans 543 residues: Glutamyl-tRNA(Gln) amidotransferase subunit A, chloroplastic/mitochondrial (543 aa).

Active-site charge relay system residues include K121 and S196. The active-site Acyl-ester intermediate is S220.

Belongs to the amidase family. GatA subfamily. Subunit of the heterotrimeric GatCAB amidotransferase (AdT) complex, composed of A, B and C subunits.

The protein localises to the mitochondrion. It localises to the plastid. It is found in the chloroplast stroma. It catalyses the reaction L-glutamyl-tRNA(Gln) + L-glutamine + ATP + H2O = L-glutaminyl-tRNA(Gln) + L-glutamate + ADP + phosphate + H(+). In terms of biological role, allows the formation of correctly charged Gln-tRNA(Gln) through the transamidation of misacylated Glu-tRNA(Gln) in chloroplasts and mitochondria. The reaction takes place in the presence of glutamine and ATP through an activated gamma-phospho-Glu-tRNA(Gln). The sequence is that of Glutamyl-tRNA(Gln) amidotransferase subunit A, chloroplastic/mitochondrial from Zea mays (Maize).